A 429-amino-acid chain; its full sequence is Enolase (429 aa).

Gln-163 provides a ligand contact to (2R)-2-phosphoglycerate. Glu-205 (proton donor) is an active-site residue. Residues Asp-242, Glu-286, and Asp-313 each coordinate Mg(2+). (2R)-2-phosphoglycerate is bound by residues Lys-338, Arg-367, Ser-368, and Lys-389. Residue Lys-338 is the Proton acceptor of the active site.

Belongs to the enolase family. The cofactor is Mg(2+).

It is found in the cytoplasm. The protein localises to the secreted. It localises to the cell surface. It catalyses the reaction (2R)-2-phosphoglycerate = phosphoenolpyruvate + H2O. The protein operates within carbohydrate degradation; glycolysis; pyruvate from D-glyceraldehyde 3-phosphate: step 4/5. Catalyzes the reversible conversion of 2-phosphoglycerate (2-PG) into phosphoenolpyruvate (PEP). It is essential for the degradation of carbohydrates via glycolysis. This Geotalea uraniireducens (strain Rf4) (Geobacter uraniireducens) protein is Enolase.